We begin with the raw amino-acid sequence, 81 residues long: MKQNIHPNYQPVVFMDTTTGYKFLTGSTKGSKETVEWEDGNTYPLIRVEISSDSHPFYTGRQKFQAADGRIARFEKKYGKQ.

Belongs to the bacterial ribosomal protein bL31 family. Type B subfamily. Part of the 50S ribosomal subunit.

The polypeptide is Large ribosomal subunit protein bL31B (Lactococcus lactis subsp. cremoris (strain MG1363)).